Consider the following 1235-residue polypeptide: MGITKRSKDKAARAERSAGGDKSSSAKPKKATFDTTKKKEIGVSDLTLLSKVSNEAINENLKKRFEGREIYTYIGHVLVSVNPFRDLGIYTDQVLESYKGKNRLEMPPHVFAIAESAYYNMKAYSENQCVIISGESGAGKTEAAKRIMQYIANVSGGGSGDIQQIKDMVLATNPLLESFGNAKTLRNNNSSRFGKYLQIHFNAQGEPIGADITNYLLEKSRVVGQIANERNFHIFYQFTKGASQQYREMYGIQKPETYLYTSKAKCFDVDGIDDLAEYQDTLNAMKIIGLSQQEQDNIFRMLSAILWAGNLVFKEGDDGYAAVSDQSVVDFLAYLLEVDPAQLVHALTIRILTPRPGEVIESPANVPQATATRDALAMAIYYNLFDWIVERINLSLKARQATTNSIGILDIYGFEIFEKNSFEQLCINYVNEKLQQIFIQLTLKAEQDEYAREQIKWTPIKYFDNKIVCDLIESTRPPGIFSAMKDATKTAHADPAASDRTFMQSINGMSNPHLTPRQGAFIVKHYAGDVTYSVDGITDKNKDLLLKGVQNLFQASQNQFVHTLFPQQVDLDNRRQPPSAGDRIRTSANALVDTLMKCQPSYIRTIKPNENKSPTEYNEPNVLHQVKYLGLQENVRIRRAGFAYRQSFEKFVDRFFLLSPATSYAGEYTWTGSYEAATKQILKDTSIPQEEWQLGVTKAFIKSPETLFALEHMRDRYWHNMATRIQRMWRAYLAYRAEAAIRIQRIWRKKRVGAEYLQLREEGHKVLGGRKERRRMSILGSRRFLGDYLGINATTGPGAQIRNAIGIGSNEKAVFSCRGELLEHKFGRSSKPSPRILVVTNSKFYIVAQVLNQGHVQIMAEKAFPLASIKFIGASTARDDWFSLGVGSQQEPDPLLNCVLKTEMFTQMKRVMPGSFNLKIGDAIEYAKKPGKMQLVKVLKDAPTSQDFYKSSTVHTQPGEPPNSVSRPQPKAKPVPPRPITKGKLIKPGGPGGRPARNANPNRTAQPRPGGGPSIAASNPLASSAAAASSRPVPAHPGAAATPAAAKSLPSHTRQQSSTSTVRPPPPPPPAPAAKPKIMAKVLYDFAGTRENELSIKAGDMIEIVQKENNGWWLAKTPEGQAWVPAAYVEEQAPAPPVVAPRPPPPPPPAANGGGRVAPQPPAKRPVAGRKPAPAPAVASLQNRDSGMSLNGANGSGSDASRSSTPTPSIAGSLADALKARKQAMAKRDDDEDDW.

A disordered region spans residues 1 to 34 (MGITKRSKDKAARAERSAGGDKSSSAKPKKATFD). Residues 9 to 19 (DKAARAERSAG) are compositionally biased toward basic and acidic residues. A Myosin motor domain is found at 41–715 (IGVSDLTLLS…TLFALEHMRD (675 aa)). 134–141 (GESGAGKT) provides a ligand contact to ATP. The tract at residues 405 to 487 (SIGILDIYGF…PGIFSAMKDA (83 aa)) is actin-binding. IQ domains lie at 719–739 (HNMA…RAEA) and 740–765 (AIRI…EGHK). Residues 773 to 962 (RRRMSILGSR…TVHTQPGEPP (190 aa)) form the TH1 domain. 2 disordered regions span residues 949–1076 (YKSS…AAKP) and 1135–1235 (APPV…EDDW). Residues 982–1046 (KGKLIKPGGP…PGAAATPAAA (65 aa)) show a composition bias toward low complexity. A compositionally biased stretch (polar residues) spans 1050-1062 (PSHTRQQSSTSTV). Pro residues predominate over residues 1063-1073 (RPPPPPPPAPA). Residues 1075 to 1134 (KPKIMAKVLYDFAGTRENELSIKAGDMIEIVQKENNGWWLAKTPEGQAWVPAAYVEEQAP) form the SH3 domain. Residues 1135–1150 (APPVVAPRPPPPPPPA) are compositionally biased toward pro residues. Polar residues predominate over residues 1180 to 1210 (SLQNRDSGMSLNGANGSGSDASRSSTPTPSI).

This sequence belongs to the TRAFAC class myosin-kinesin ATPase superfamily. Myosin family.

It is found in the cytoplasm. The protein resides in the cytoskeleton. Its subcellular location is the actin patch. Functionally, type-I myosin implicated in the organization of the actin cytoskeleton. Required for proper actin cytoskeleton polarization. At the cell cortex, assembles in patch-like structures together with proteins from the actin-polymerizing machinery and promotes actin assembly. Functions as actin nucleation-promoting factor (NPF) for the Arp2/3 complex. The polypeptide is Myosin-1 (myo-1) (Neurospora crassa (strain ATCC 24698 / 74-OR23-1A / CBS 708.71 / DSM 1257 / FGSC 987)).